A 654-amino-acid chain; its full sequence is uncharacterized protein (654 aa).

Over residues 1–13 the composition is skewed to polar residues; it reads MSNLILTPSNNGT. The tract at residues 1 to 23 is disordered; the sequence is MSNLILTPSNNGTERPYRSRKTR. The zn(2)-C6 fungal-type DNA-binding region spans 25–54; it reads CDNCRLRKSRCVVESIGNPCLLCTQLKIPC. A disordered region spans residues 63 to 96; sequence RNKQKKQQDSVSDDTPSEATTTTNDDRDPKYNAL.

The protein resides in the cytoplasm. It localises to the nucleus. This is an uncharacterized protein from Schizosaccharomyces pombe (strain 972 / ATCC 24843) (Fission yeast).